The primary structure comprises 198 residues: Na(+)-translocating NADH-quinone reductase subunit E (198 aa).

6 helical membrane passes run 11–31 (SIFIENMALSFFLGMCTFLAV), 35–55 (VSTAFGLGIAVIVVLGIAVPA), 77–97 (FLNFITFIGVIAALVQILEMI), 110–130 (GIFLPLITVNCAIFGAVSFMV), 140–160 (VVYGIGAGTGWMLAIVALAGI), and 176–196 (LGITFISAGLMALGFMSFSGI).

This sequence belongs to the NqrDE/RnfAE family. Composed of six subunits; NqrA, NqrB, NqrC, NqrD, NqrE and NqrF.

The protein resides in the cell inner membrane. The catalysed reaction is a ubiquinone + n Na(+)(in) + NADH + H(+) = a ubiquinol + n Na(+)(out) + NAD(+). In terms of biological role, NQR complex catalyzes the reduction of ubiquinone-1 to ubiquinol by two successive reactions, coupled with the transport of Na(+) ions from the cytoplasm to the periplasm. NqrA to NqrE are probably involved in the second step, the conversion of ubisemiquinone to ubiquinol. The protein is Na(+)-translocating NADH-quinone reductase subunit E of Glaesserella parasuis serovar 5 (strain SH0165) (Haemophilus parasuis).